The sequence spans 29 residues: HSQGTFTNDYTKYQDSRRAQDFVQWLMSN.

It belongs to the glucagon family.

It localises to the secreted. Its function is as follows. Glucagon plays a key role in glucose metabolism and homeostasis. Regulates blood glucose by increasing gluconeogenesis and decreasing glycolysis. The polypeptide is Glucagon (gcg) (Polypterus senegalus (Senegal bichir)).